The sequence spans 473 residues: H(+)/Cl(-) exchange transporter ClcA (473 aa).

Residues 1 to 32 are Cytoplasmic-facing; sequence MKTDTSTFLAQQIVRLRRRDQIRRLMQRDKTP. A helical membrane pass occupies residues 33 to 69; it reads LAILFMAAVVGTLTGLVGVAFEKTVSWVQNMRIGALV. Over 70–76 the chain is Periplasmic; that stretch reads QVADHAF. Residues 77–100 traverse the membrane as a helical segment; the sequence is LLWPLAFILSALLAMVGYFLVRKF. Residues 106-110 carry the Selectivity filter part_1 motif; sequence GSGIP. Serine 107 contacts chloride. Residues 109-116 constitute an intramembrane region (helical); the sequence is IPEIEGAL. Residues 117 to 123 are Cytoplasmic-facing; the sequence is EELRPVR. Helical transmembrane passes span 124 to 141 and 148 to 166; these read WWRVLPVKFIGGMGTLGA and EGPTVQIGGNLGRMVLDVF. A Selectivity filter part_2 motif is present at residues 146–150; the sequence is GREGP. Residues 167–176 lie on the Cytoplasmic side of the membrane; the sequence is RMRSAEARHT. 2 intramembrane regions (helical) span residues 177 to 189 and 193 to 201; these read LLATGAAAGLSAA and PLAGILFII. Residues 202-214 lie on the Cytoplasmic side of the membrane; the sequence is EEMRPQFRYNLIS. Residues 215-232 traverse the membrane as a helical segment; that stretch reads IKAVFTGVIMSSIVFRIF. Residues 233–252 are Periplasmic-facing; the sequence is NGEAPIIEVGKLSDAPVNTL. A helical membrane pass occupies residues 253-281; sequence WLYLILGIIFGCVGPVFNSLVLRTQDMFQ. Over 282 to 287 the chain is Cytoplasmic; that stretch reads RFHGGE. Residues 288 to 309 form a helical membrane-spanning segment; sequence IKKWVLMGGAIGGLCGILGLIE. The Periplasmic segment spans residues 310 to 329; the sequence is PAAAGGGFNLIPIAAAGNFS. 2 consecutive transmembrane segments (helical) span residues 330–349 and 355–376; these read VGLLLFIFITRVVTTLLCFS and GIFAPMLALGTLLGTAFGMAAA. A Selectivity filter part_3 motif is present at residues 355 to 359; sequence GIFAP. Chloride-binding residues include isoleucine 356 and phenylalanine 357. At 377-386 the chain is on the periplasmic side; sequence VLFPQYHPEA. Positions 387–401 form an intramembrane region, helical; it reads GTFAIAGMGALMAAS. Positions 402-404 form an intramembrane region, note=Loop between two helices; sequence VRA. The segment at residues 405–416 is an intramembrane region (helical); sequence PLTGIVLVLEMT. An intramembrane region (note=Loop between two helices) is located at residues 417 to 421; the sequence is DNYQL. Residues 422 to 438 traverse the membrane as a helical segment; it reads ILPMIITCLGATLLAQF. Topologically, residues 439–473 are cytoplasmic; that stretch reads LGGKPLYSTILARTLAKQDAEQAAKNQNAPAGENT. Tyrosine 445 is a chloride binding site.

This sequence belongs to the chloride channel (TC 2.A.49) family. ClcA subfamily. In terms of assembly, homodimer.

It localises to the cell inner membrane. It catalyses the reaction 2 chloride(in) + H(+)(out) = 2 chloride(out) + H(+)(in). Proton-coupled chloride transporter. Functions as antiport system and exchanges two chloride ions for 1 proton. Probably acts as an electrical shunt for an outwardly-directed proton pump that is linked to amino acid decarboxylation, as part of the extreme acid resistance (XAR) response. This Salmonella paratyphi A (strain AKU_12601) protein is H(+)/Cl(-) exchange transporter ClcA.